Here is a 181-residue protein sequence, read N- to C-terminus: FMN reductase (NADH) RutF (181 aa).

The protein belongs to the non-flavoprotein flavin reductase family. RutF subfamily.

The enzyme catalyses FMNH2 + NAD(+) = FMN + NADH + 2 H(+). Catalyzes the reduction of FMN to FMNH2 which is used to reduce pyrimidine by RutA via the Rut pathway. In Ancylobacter novellus (strain ATCC 8093 / DSM 506 / JCM 20403 / CCM 1077 / IAM 12100 / NBRC 12443 / NCIMB 10456) (Starkeya novella), this protein is FMN reductase (NADH) RutF.